Reading from the N-terminus, the 357-residue chain is 3-isopropylmalate dehydrogenase (357 aa).

76 to 89 is an NAD(+) binding site; it reads GPKWDALDSNIRPE. Substrate is bound by residues R96, R106, R134, and D224. The Mg(2+) site is built by D224, D248, and D252. Residue 282-294 participates in NAD(+) binding; sequence GSAPDIAGQGVAN.

It belongs to the isocitrate and isopropylmalate dehydrogenases family. LeuB type 1 subfamily. In terms of assembly, homodimer. The cofactor is Mg(2+). Mn(2+) is required as a cofactor.

It is found in the cytoplasm. The catalysed reaction is (2R,3S)-3-isopropylmalate + NAD(+) = 4-methyl-2-oxopentanoate + CO2 + NADH. It functions in the pathway amino-acid biosynthesis; L-leucine biosynthesis; L-leucine from 3-methyl-2-oxobutanoate: step 3/4. Catalyzes the oxidation of 3-carboxy-2-hydroxy-4-methylpentanoate (3-isopropylmalate) to 3-carboxy-4-methyl-2-oxopentanoate. The product decarboxylates to 4-methyl-2 oxopentanoate. The chain is 3-isopropylmalate dehydrogenase from Saccharophagus degradans (strain 2-40 / ATCC 43961 / DSM 17024).